Here is a 306-residue protein sequence, read N- to C-terminus: NADH-cytochrome b5 reductase 2-B (306 aa).

A helical membrane pass occupies residues 12–32 (PLLLSSGIAVTAAAAVYFSTG). The region spanning 53–157 (STWVDLPLVK…TGPIVKYEWK (105 aa)) is the FAD-binding FR-type domain. 160-195 (KFDSVTLLGAGSGITPLYQLMGSILSNPEDKTKINL) contacts FAD.

The protein belongs to the flavoprotein pyridine nucleotide cytochrome reductase family. It depends on FAD as a cofactor.

It localises to the mitochondrion outer membrane. The enzyme catalyses 2 Fe(III)-[cytochrome b5] + NADH = 2 Fe(II)-[cytochrome b5] + NAD(+) + H(+). Its function is as follows. May mediate the reduction of outer membrane cytochrome b5. The polypeptide is NADH-cytochrome b5 reductase 2-B (MCR1B) (Vanderwaltozyma polyspora (strain ATCC 22028 / DSM 70294 / BCRC 21397 / CBS 2163 / NBRC 10782 / NRRL Y-8283 / UCD 57-17) (Kluyveromyces polysporus)).